A 471-amino-acid chain; its full sequence is Collagenase 3 (471 aa).

Residues 1–19 (MHPGVLAAFLFLSWTHCRA) form the signal peptide. Residues 20-103 (LPLPSGGDED…PRCGVPDVGE (84 aa)) constitute a propeptide, activation peptide. The Cysteine switch signature appears at 94-101 (PRCGVPDV). Cysteine 96 lines the Zn(2+) pocket. Residue asparagine 117 is glycosylated (N-linked (GlcNAc...) asparagine). Aspartate 128 is a Ca(2+) binding site. N-linked (GlcNAc...) asparagine glycosylation is present at asparagine 152. Position 162 (aspartate 162) interacts with Ca(2+). Residues histidine 172 and aspartate 174 each coordinate Zn(2+). The interaction with TIMP2 stretch occupies residues 176-246 (YPFDGPSGLL…GALMFPIYTY (71 aa)). Aspartate 179, glycine 180, serine 182, and leucine 184 together coordinate Ca(2+). Position 187 (histidine 187) interacts with Zn(2+). 3 residues coordinate Ca(2+): asparagine 194, glycine 196, and aspartate 198. Position 200 (histidine 200) interacts with Zn(2+). Aspartate 202, aspartate 203, and glutamate 205 together coordinate Ca(2+). Residue histidine 222 coordinates Zn(2+). Glutamate 223 is a catalytic residue. Residues histidine 226, histidine 232, and methionine 240 each coordinate Zn(2+). The disordered stretch occupies residues 263 to 284 (QSLYGPGDEDPNPKHPKTPDKC). The interval 268–471 (PGDEDPNPKH…VMPANSILWC (204 aa)) is interaction with collagen. Residues 273 to 284 (PNPKHPKTPDKC) show a composition bias toward basic and acidic residues. Hemopexin repeat units lie at residues 281-330 (PDKC…WPEL), 331-377 (PNRI…GLPK), 379-427 (VKKI…FPGI), and 428-471 (GDKV…ILWC). Cysteine 284 and cysteine 471 are oxidised to a cystine. 4 residues coordinate Ca(2+): aspartate 291, isoleucine 293, aspartate 335, and alanine 337. Position 366 is a phosphotyrosine; by PKDCC (tyrosine 366). Residues serine 383, alanine 385, aspartate 432, and valine 434 each coordinate Ca(2+).

This sequence belongs to the peptidase M10A family. Monomer. Interacts with TIMP1, TIMP2 and TIMP3. Binds (via the C-terminal region) to collagen. Ca(2+) serves as cofactor. It depends on Zn(2+) as a cofactor. The proenzyme is activated by removal of the propeptide; this cleavage can be effected by other matrix metalloproteinases, such as MMP2, MMP3 and MMP14 and may involve several cleavage steps. Cleavage can also be autocatalytic, after partial maturation by another protease or after treatment with 4-aminophenylmercuric acetate (APMA) (in vitro). In terms of processing, N-glycosylated. Post-translationally, tyrosine phosphorylated by PKDCC/VLK. In terms of tissue distribution, detected in fetal cartilage and calvaria, in chondrocytes of hypertrophic cartilage in vertebrae and in the dorsal end of ribs undergoing ossification, as well as in osteoblasts and periosteal cells below the inner periosteal region of ossified ribs. Detected in chondrocytes from in joint cartilage that have been treated with TNF and IL1B, but not in untreated chondrocytes. Detected in T lymphocytes. Detected in breast carcinoma tissue.

Its subcellular location is the secreted. The protein localises to the extracellular space. It localises to the extracellular matrix. With respect to regulation, inhibited by TIMP1, TIMP2 and TIMP3. Inhibited by acetohydroxamic acid and other zinc chelators. Its function is as follows. Plays a role in the degradation of extracellular matrix proteins including fibrillar collagen, fibronectin, TNC and ACAN. Cleaves triple helical collagens, including type I, type II and type III collagen, but has the highest activity with soluble type II collagen. Can also degrade collagen type IV, type XIV and type X. May also function by activating or degrading key regulatory proteins, such as TGFB1 and CCN2. Plays a role in wound healing, tissue remodeling, cartilage degradation, bone development, bone mineralization and ossification. Required for normal embryonic bone development and ossification. Plays a role in the healing of bone fractures via endochondral ossification. Plays a role in wound healing, probably by a mechanism that involves proteolytic activation of TGFB1 and degradation of CCN2. Plays a role in keratinocyte migration during wound healing. May play a role in cell migration and in tumor cell invasion. The protein is Collagenase 3 (MMP13) of Homo sapiens (Human).